The chain runs to 511 residues: Cytochrome P450 89A9 (511 aa).

The chain crosses the membrane as a helical; Signal-anchor for type II membrane protein span at residues 6–26; that stretch reads IIFLIISSLTFSIFLKLIFFF. Heme is bound at residue C454.

This sequence belongs to the cytochrome P450 family. Requires heme as cofactor.

The protein localises to the endoplasmic reticulum membrane. The catalysed reaction is primary fluorescent chlorophyll catabolite + reduced [NADPH--hemoprotein reductase] + O2 = primary fluorescent dioxobilin-type chlorophyll catabolite + formate + oxidized [NADPH--hemoprotein reductase] + 2 H(+). Its pathway is porphyrin-containing compound metabolism; chlorophyll degradation. Its function is as follows. Involved in the chlorophyll breakdown by its action in nonpolar primary fluorescent chlorophyll catabolite (pFCC) decarbonylation. Involved in the formation of major chlorophyll breakdown products, including non-fluorescent dioxobilin-type chlorophyll catabolites (NDCCs), during leaf senescence. The protein is Cytochrome P450 89A9 of Arabidopsis thaliana (Mouse-ear cress).